A 569-amino-acid polypeptide reads, in one-letter code: Arginine--tRNA ligase (569 aa).

The 'HIGH' region motif lies at 123-133 (ANPNGPLHVGH).

Belongs to the class-I aminoacyl-tRNA synthetase family.

The protein localises to the cytoplasm. It carries out the reaction tRNA(Arg) + L-arginine + ATP = L-arginyl-tRNA(Arg) + AMP + diphosphate. In Methanosarcina mazei (strain ATCC BAA-159 / DSM 3647 / Goe1 / Go1 / JCM 11833 / OCM 88) (Methanosarcina frisia), this protein is Arginine--tRNA ligase.